Here is a 285-residue protein sequence, read N- to C-terminus: Hydrolase in pqqF 5'region (285 aa).

The region spanning 22–258 is the CN hydrolase domain; that stretch reads MRVALYQCPP…EALIIGTLDR (237 aa). The active-site Proton acceptor is the E60. The Proton donor role is filled by K131. The active-site Nucleophile is C165.

It belongs to the carbon-nitrogen hydrolase superfamily. NIT1/NIT2 family.

The chain is Hydrolase in pqqF 5'region from Pseudomonas protegens (strain DSM 19095 / LMG 27888 / CFBP 6595 / CHA0).